We begin with the raw amino-acid sequence, 633 residues long: Pentatricopeptide repeat-containing protein At1g43980, mitochondrial (633 aa).

A mitochondrion-targeting transit peptide spans 1–30; sequence MFQLLRRAHGLCMPSSLYFSRLVNRSLLSK. 14 PPR repeats span residues 50-80, 81-111, 112-146, 147-178, 180-210, 211-245, 246-280, 281-311, 312-346, 347-380, 381-411, 412-447, 448-483, and 484-514; these read TTYWGNRCLQLYFKSGSVINALQLFDDIPDK, NTITWNVCLKGLFKNGYLNNALDLFDEMPER, DVVSWNTMISGLVSCGFHEYGIRVFFDMQRWEIRP, TEFTFSILASLVTCVRHGEQIHGNAICSGVSR, NLVVWNSVMDMYRRLGVFDYALSVFLTMEDR, DVVSWNCLILSCSDSGNKEVALDQFWLMREMEIQP, DEYTVSMVVSICSDLRELSKGKQALALCIKMGFLS, NSIVLGAGIDMFSKCNRLDDSVKLFRELEKW, DSVLCNSMIGSYSWHCCGEDALRLFILAMTQSVRP, DKFTFSSVLSSMNAVMLDHGADVHSLVIKLGFDL, DTAVATSLMEMYFKTGSVDLAMGVFAKTDGK, DLIFWNTVIMGLARNSRAVESLAIFNQLLMNQSLKP, DRVTLMGILVACCYAGFVNEGIQIFSSMEKAHGVNP, and GNEHYACIIELLCRVGMINEAKDIADKIPFE. The interval 519 to 594 is type E motif; the sequence is IWEPILCASL…AQGSSKISIE (76 aa).

This sequence belongs to the PPR family. PCMP-E subfamily.

It is found in the mitochondrion. The chain is Pentatricopeptide repeat-containing protein At1g43980, mitochondrial (PCMP-E58) from Arabidopsis thaliana (Mouse-ear cress).